Consider the following 230-residue polypeptide: Orotidine 5'-phosphate decarboxylase (230 aa).

Residues aspartate 10, lysine 31, 58 to 67, threonine 117, arginine 179, glutamine 188, glycine 208, and arginine 209 each bind substrate; that span reads DLKLHDIPNT. The active-site Proton donor is the lysine 60.

The protein belongs to the OMP decarboxylase family. Type 1 subfamily. Homodimer.

It carries out the reaction orotidine 5'-phosphate + H(+) = UMP + CO2. Its pathway is pyrimidine metabolism; UMP biosynthesis via de novo pathway; UMP from orotate: step 2/2. Its function is as follows. Catalyzes the decarboxylation of orotidine 5'-monophosphate (OMP) to uridine 5'-monophosphate (UMP). The sequence is that of Orotidine 5'-phosphate decarboxylase from Staphylococcus epidermidis (strain ATCC 35984 / DSM 28319 / BCRC 17069 / CCUG 31568 / BM 3577 / RP62A).